Here is a 662-residue protein sequence, read N- to C-terminus: ABC transporter G family member 25 (662 aa).

Residues methionine 1 to leucine 30 are disordered. The segment covering asparagine 9–leucine 20 has biased composition (polar residues). An N-linked (GlcNAc...) asparagine glycan is attached at asparagine 56. The region spanning glutamine 69–phenylalanine 308 is the ABC transporter domain. Glycine 101–serine 108 provides a ligand contact to ATP. A glycan (N-linked (GlcNAc...) asparagine) is linked at asparagine 122. Helical transmembrane passes span valine 374 to leucine 394, phenylalanine 406 to tryptophan 426, leucine 437 to phenylalanine 457, leucine 489 to leucine 509, valine 522 to methionine 542, alanine 547 to asparagine 567, and valine 629 to tyrosine 649. Residues serine 388–tyrosine 594 form the ABC transmembrane type-2 domain.

Belongs to the ABC transporter superfamily. ABCG family. Eye pigment precursor importer (TC 3.A.1.204) subfamily. As to expression, mainly expressed in vascular tissues,predominantly in phloem companion cells, with highest levels in roots and seeds, and lower levels in seedlings, stems, leaves and flowers. Mostly observed in inflorescence meristems relative to cauline leaves and developing siliques. In seeds, mainly expressed in the endosperm and, to a lesser extent, in the embryo.

It localises to the cell membrane. It carries out the reaction abscisate(in) + ATP + H2O = abscisate(out) + ADP + phosphate + H(+). Its activity is regulated as follows. ADP and vanadate (ABC transporters inhibitor) inhibit the ATP-dependent abscisic acid (ABA) uptake. Its function is as follows. High affinity abscisic acid (ABA) transporter that mediates the export of ABA, with a preference for (+)-ABA, through the plasma membrane, especially in vascular tissues (e.g. phloem companion cells), and is involved in the intercellular ABA signaling pathway. Together with ABCG31, export ABA from the endosperm to deliver it to the embryo via ABCG30 and ABCG40-mediated import to suppress radicle extension and subsequent embryonic growth. The sequence is that of ABC transporter G family member 25 from Arabidopsis thaliana (Mouse-ear cress).